The following is a 589-amino-acid chain: Probable methyltransferase PMT23 (589 aa).

The Cytoplasmic segment spans residues 1–4 (MAIS). The helical; Signal-anchor for type II membrane protein transmembrane segment at 5–25 (VQHVVVLLLSTLLIAITFFLF) threads the bilayer. Residues 26 to 589 (TSDNARFPFP…FWRPAKPELR (564 aa)) are Lumenal-facing. N-linked (GlcNAc...) asparagine glycans are attached at residues N70, N375, and N442.

It belongs to the methyltransferase superfamily.

The protein resides in the golgi apparatus membrane. The polypeptide is Probable methyltransferase PMT23 (Arabidopsis thaliana (Mouse-ear cress)).